The sequence spans 427 residues: 3-phosphoshikimate 1-carboxyvinyltransferase (427 aa).

Residues K22, S23, and R27 each contribute to the 3-phosphoshikimate site. Residue K22 coordinates phosphoenolpyruvate. Phosphoenolpyruvate is bound by residues G96 and R124. 3-phosphoshikimate-binding residues include S169, S170, Q171, S197, D313, N336, and K340. Residue Q171 participates in phosphoenolpyruvate binding. The Proton acceptor role is filled by D313. R344, R386, and K411 together coordinate phosphoenolpyruvate.

The protein belongs to the EPSP synthase family. As to quaternary structure, monomer.

It is found in the cytoplasm. The catalysed reaction is 3-phosphoshikimate + phosphoenolpyruvate = 5-O-(1-carboxyvinyl)-3-phosphoshikimate + phosphate. It participates in metabolic intermediate biosynthesis; chorismate biosynthesis; chorismate from D-erythrose 4-phosphate and phosphoenolpyruvate: step 6/7. In terms of biological role, catalyzes the transfer of the enolpyruvyl moiety of phosphoenolpyruvate (PEP) to the 5-hydroxyl of shikimate-3-phosphate (S3P) to produce enolpyruvyl shikimate-3-phosphate and inorganic phosphate. The polypeptide is 3-phosphoshikimate 1-carboxyvinyltransferase (Shigella dysenteriae).